Reading from the N-terminus, the 70-residue chain is Large ribosomal subunit protein bL31 (70 aa).

The Zn(2+) site is built by Cys16, Cys18, Cys36, and Cys39.

It belongs to the bacterial ribosomal protein bL31 family. Type A subfamily. Part of the 50S ribosomal subunit. Zn(2+) is required as a cofactor.

Its function is as follows. Binds the 23S rRNA. The chain is Large ribosomal subunit protein bL31 from Tolumonas auensis (strain DSM 9187 / NBRC 110442 / TA 4).